Reading from the N-terminus, the 939-residue chain is UvrABC system protein A (939 aa).

32–39 (GLSGSGKS) is a binding site for ATP. The C4-type zinc finger occupies 252–279 (CPDCGISIGEISPSMFSFNAPFGKCDVC). 2 consecutive ABC transporter domains span residues 309–588 (WGEG…KESI) and 608–936 (AGKN…QYLK). 640–647 (GVSGSGKS) contacts ATP. Residues 739–765 (CEACKGDGIVRIEMQFLSDVYVPCDVC) form a C4-type zinc finger.

The protein belongs to the ABC transporter superfamily. UvrA family. Forms a heterotetramer with UvrB during the search for lesions.

Its subcellular location is the cytoplasm. In terms of biological role, the UvrABC repair system catalyzes the recognition and processing of DNA lesions. UvrA is an ATPase and a DNA-binding protein. A damage recognition complex composed of 2 UvrA and 2 UvrB subunits scans DNA for abnormalities. When the presence of a lesion has been verified by UvrB, the UvrA molecules dissociate. This Clostridium acetobutylicum (strain ATCC 824 / DSM 792 / JCM 1419 / IAM 19013 / LMG 5710 / NBRC 13948 / NRRL B-527 / VKM B-1787 / 2291 / W) protein is UvrABC system protein A.